The sequence spans 212 residues: Pyridoxine/pyridoxamine 5'-phosphate oxidase (212 aa).

Residues 8-11 (RREY) and lysine 66 contribute to the substrate site. Residues 61–66 (RIVLLK), 76–77 (FT), arginine 82, lysine 83, and glutamine 105 each bind FMN. Tyrosine 123, arginine 127, and serine 131 together coordinate substrate. Residues 140 to 141 (QS) and tryptophan 185 contribute to the FMN site. 191–193 (RLH) is a binding site for substrate. Arginine 195 is an FMN binding site.

It belongs to the pyridoxamine 5'-phosphate oxidase family. As to quaternary structure, homodimer. Requires FMN as cofactor.

It catalyses the reaction pyridoxamine 5'-phosphate + O2 + H2O = pyridoxal 5'-phosphate + H2O2 + NH4(+). The catalysed reaction is pyridoxine 5'-phosphate + O2 = pyridoxal 5'-phosphate + H2O2. Its pathway is cofactor metabolism; pyridoxal 5'-phosphate salvage; pyridoxal 5'-phosphate from pyridoxamine 5'-phosphate: step 1/1. It participates in cofactor metabolism; pyridoxal 5'-phosphate salvage; pyridoxal 5'-phosphate from pyridoxine 5'-phosphate: step 1/1. Its function is as follows. Catalyzes the oxidation of either pyridoxine 5'-phosphate (PNP) or pyridoxamine 5'-phosphate (PMP) into pyridoxal 5'-phosphate (PLP). This chain is Pyridoxine/pyridoxamine 5'-phosphate oxidase, found in Shewanella sp. (strain MR-4).